A 218-amino-acid polypeptide reads, in one-letter code: Small ribosomal subunit protein uS3c (218 aa).

A KH type-2 domain is found at 47 to 117; the sequence is VRTHIRNSSN…KLKITLSEID (71 aa).

This sequence belongs to the universal ribosomal protein uS3 family. Part of the 30S ribosomal subunit.

The protein resides in the plastid. It is found in the chloroplast. The polypeptide is Small ribosomal subunit protein uS3c (rps3) (Spirogyra maxima (Green alga)).